The following is a 152-amino-acid chain: D-aminoacyl-tRNA deacylase (152 aa).

The short motif at 142-143 (GP) is the Gly-cisPro motif, important for rejection of L-amino acids element.

It belongs to the DTD family. As to quaternary structure, homodimer.

The protein localises to the cytoplasm. The enzyme catalyses glycyl-tRNA(Ala) + H2O = tRNA(Ala) + glycine + H(+). It carries out the reaction a D-aminoacyl-tRNA + H2O = a tRNA + a D-alpha-amino acid + H(+). Functionally, an aminoacyl-tRNA editing enzyme that deacylates mischarged D-aminoacyl-tRNAs. Also deacylates mischarged glycyl-tRNA(Ala), protecting cells against glycine mischarging by AlaRS. Acts via tRNA-based rather than protein-based catalysis; rejects L-amino acids rather than detecting D-amino acids in the active site. By recycling D-aminoacyl-tRNA to D-amino acids and free tRNA molecules, this enzyme counteracts the toxicity associated with the formation of D-aminoacyl-tRNA entities in vivo and helps enforce protein L-homochirality. This chain is D-aminoacyl-tRNA deacylase, found in Burkholderia vietnamiensis (strain G4 / LMG 22486) (Burkholderia cepacia (strain R1808)).